The chain runs to 99 residues: Glycine-rich protein (99 aa).

A signal peptide spans 1 to 18 (MKSMIAVLLLALVATSMA).

It belongs to the non-disulfide-bridged peptide (NDBP) superfamily. In terms of tissue distribution, expressed by the venom gland.

The protein localises to the secreted. This is Glycine-rich protein from Lychas mucronatus (Chinese swimming scorpion).